The primary structure comprises 737 residues: Translation initiation factor IF-2 (737 aa).

Residues 69-80 (EKKEEKPIRKIM) show a composition bias toward basic and acidic residues. The tract at residues 69-130 (EKKEEKPIRK…HKNKGKKKKG (62 aa)) is disordered. Basic residues-rich tracts occupy residues 95-108 (NNKKAKFQQTKNKK) and 121-130 (HKNKGKKKKG). Residues 237–404 (ERPPVITIMG…TILITAEILE (168 aa)) form the tr-type G domain. The interval 246-253 (GHVDHGKT) is G1. A GTP-binding site is contributed by 246–253 (GHVDHGKT). Residues 271–275 (GITQK) form a G2 region. Positions 292–295 (DTPG) are G3. Residues 292-296 (DTPGH) and 346-349 (NKID) contribute to the GTP site. The interval 346–349 (NKID) is G4. The G5 stretch occupies residues 382–384 (SAK).

It belongs to the TRAFAC class translation factor GTPase superfamily. Classic translation factor GTPase family. IF-2 subfamily.

It is found in the cytoplasm. In terms of biological role, one of the essential components for the initiation of protein synthesis. Protects formylmethionyl-tRNA from spontaneous hydrolysis and promotes its binding to the 30S ribosomal subunits. Also involved in the hydrolysis of GTP during the formation of the 70S ribosomal complex. In Fusobacterium nucleatum subsp. nucleatum (strain ATCC 25586 / DSM 15643 / BCRC 10681 / CIP 101130 / JCM 8532 / KCTC 2640 / LMG 13131 / VPI 4355), this protein is Translation initiation factor IF-2.